Reading from the N-terminus, the 240-residue chain is Thymidylate kinase (240 aa).

Residue 10 to 17 coordinates ATP; sequence GINGVGKS.

The protein belongs to the thymidylate kinase family.

It catalyses the reaction dTMP + ATP = dTDP + ADP. The protein operates within pyrimidine metabolism; dTTP biosynthesis. In terms of biological role, catalyzes the conversion of dTMP to dTDP. This chain is Thymidylate kinase (TMK), found in African swine fever virus (strain Badajoz 1971 Vero-adapted) (Ba71V).